We begin with the raw amino-acid sequence, 296 residues long: MNSNIYAVIVTYNPELKNLNALITELKEQNCYVVVVDNRTNFTLKDKLADIEKVHLICLGRNEGIAKAQNIGIRYSLEKGAEKIIFFDQDSRIRNEFIKKLSCYMDNENAKIAGPVFIDRDKSHYYPICNIKKNGLREKIHVTEGQTPFKSSVTISSGTMVSKEVFEIVGMMDEELFIDYVDTEWCLRCLNYGILVHIIPDIKMVHAIGDKSVKICGINIPIHSPVRRYYRVRNAFLLLRKNHVPLLLSIREVVFSLIHTTLIIATQKNKIEYMKKHILATLDGIRGITGGGRYNA.

Belongs to the glycosyltransferase 2 family.

Its pathway is bacterial outer membrane biogenesis; lipopolysaccharide biosynthesis. The protein is dTDP-rhamnosyl transferase RfbF (rfbF) of Shigella flexneri.